A 279-amino-acid chain; its full sequence is Putative pyruvate, phosphate dikinase regulatory protein (279 aa).

153–160 (GVSRTSKT) lines the ADP pocket.

The protein belongs to the pyruvate, phosphate/water dikinase regulatory protein family. PDRP subfamily.

The enzyme catalyses N(tele)-phospho-L-histidyl/L-threonyl-[pyruvate, phosphate dikinase] + ADP = N(tele)-phospho-L-histidyl/O-phospho-L-threonyl-[pyruvate, phosphate dikinase] + AMP + H(+). The catalysed reaction is N(tele)-phospho-L-histidyl/O-phospho-L-threonyl-[pyruvate, phosphate dikinase] + phosphate + H(+) = N(tele)-phospho-L-histidyl/L-threonyl-[pyruvate, phosphate dikinase] + diphosphate. Bifunctional serine/threonine kinase and phosphorylase involved in the regulation of the pyruvate, phosphate dikinase (PPDK) by catalyzing its phosphorylation/dephosphorylation. The sequence is that of Putative pyruvate, phosphate dikinase regulatory protein from Rhodopseudomonas palustris (strain HaA2).